The primary structure comprises 251 residues: Aquaporin TIP1-1 (251 aa).

An N-acetylmethionine modification is found at methionine 1. Over 1–23 (MPIRNIAIGRPDEATRPDALKAA) the chain is Cytoplasmic. The chain crosses the membrane as a helical span at residues 24–44 (LAEFISTLIFVVAGSGSGMAF). Residues 45-56 (NKLTENGATTPS) lie on the Vacuolar side of the membrane. Residues 57-77 (GLVAAAVAHAFGLFVAVSVGA) form a helical membrane-spanning segment. Residues 78-103 (NISGGHVNPAVTFGAFIGGNITLLRG) lie on the Cytoplasmic side of the membrane. The NPA 1 signature appears at 85-87 (NPA). The chain crosses the membrane as a helical span at residues 104 to 124 (ILYWIAQLLGSVVACLILKFA). Topologically, residues 125 to 143 (TGGLAVPAFGLSAGVGVLN) are vacuolar. The chain crosses the membrane as a helical span at residues 144 to 164 (AFVFEIVMTFGLVYTVYATAI). The Cytoplasmic segment spans residues 165–172 (DPKNGSLG). A helical transmembrane segment spans residues 173–193 (TIAPIAIGFIVGANILAGGAF). Over 194-218 (SGASMNPAVAFGPAVVSWTWTNHWV) the chain is Vacuolar. The short motif at 199–201 (NPA) is the NPA 2 element. Residues 219 to 239 (YWAGPLVGGGIAGLIYEVFFI) form a helical membrane-spanning segment. Over 240–251 (NTTHEQLPTTDY) the chain is Cytoplasmic.

Belongs to the MIP/aquaporin (TC 1.A.8) family. TIP (TC 1.A.8.10) subfamily. In terms of assembly, interacts with cucumber mosaic virus (CMV) Protein 1a. In all the vegetative organs, but not in seeds. Preferentially expressed in roots.

It is found in the vacuole membrane. Its function is as follows. Water channel required to facilitate the transport of water, diffusion of amino acids and/or peptides from the vacuolar compartment to the cytoplasm. Does not promote glycerol permeability. May play a role in the control of cell turgor and cell expansion. Its function is impaired by Hg(2+). May be involved in a vesicle-based metabolite routing through or between pre-vacuolar compartments and the central vacuole. Transports urea in yeast cells in a pH-independent manner. Transports H(2)O(2) in yeast cells. This is Aquaporin TIP1-1 (TIP1-1) from Arabidopsis thaliana (Mouse-ear cress).